The following is a 265-amino-acid chain: 3'(2'),5'-bisphosphate nucleotidase CysQ (265 aa).

Mg(2+) is bound by residues glutamate 80, aspartate 99, leucine 101, aspartate 102, and aspartate 222. Position 80 (glutamate 80) interacts with substrate. Residues 101–104 and aspartate 222 each bind substrate; that span reads LDGT.

The protein belongs to the inositol monophosphatase superfamily. CysQ family. It depends on Mg(2+) as a cofactor.

It is found in the cell inner membrane. It catalyses the reaction adenosine 3',5'-bisphosphate + H2O = AMP + phosphate. Functionally, converts adenosine-3',5'-bisphosphate (PAP) to AMP. This chain is 3'(2'),5'-bisphosphate nucleotidase CysQ, found in Buchnera aphidicola subsp. Acyrthosiphon pisum (strain APS) (Acyrthosiphon pisum symbiotic bacterium).